We begin with the raw amino-acid sequence, 360 residues long: 3-dehydroquinate synthase (360 aa).

NAD(+) contacts are provided by residues 72 to 77 (DGEEFK), 106 to 110 (GVVGD), 130 to 131 (TT), K143, K152, and 170 to 173 (TLTT). Zn(2+)-binding residues include E185, H248, and H265.

This sequence belongs to the sugar phosphate cyclases superfamily. Dehydroquinate synthase family. It depends on Co(2+) as a cofactor. Zn(2+) serves as cofactor. NAD(+) is required as a cofactor.

The protein resides in the cytoplasm. The enzyme catalyses 7-phospho-2-dehydro-3-deoxy-D-arabino-heptonate = 3-dehydroquinate + phosphate. Its pathway is metabolic intermediate biosynthesis; chorismate biosynthesis; chorismate from D-erythrose 4-phosphate and phosphoenolpyruvate: step 2/7. Catalyzes the conversion of 3-deoxy-D-arabino-heptulosonate 7-phosphate (DAHP) to dehydroquinate (DHQ). The protein is 3-dehydroquinate synthase of Geobacter metallireducens (strain ATCC 53774 / DSM 7210 / GS-15).